A 425-amino-acid chain; its full sequence is Ribosome biogenesis protein WDR12 homolog (425 aa).

The tract at residues Leu-13–Glu-94 is ubiquitin-like (UBL) domain. WD repeat units lie at residues Leu-106–Ile-143, Gly-145–Glu-187, Gly-194–Asp-233, Gly-258–Glu-296, Ser-298–Val-337, Gly-343–Phe-383, and Gly-387–Lys-425. Positions Val-227–Gly-247 are disordered.

The protein belongs to the WD repeat WDR12/YTM1 family.

Its subcellular location is the nucleus. The protein localises to the nucleolus. The protein resides in the nucleoplasm. Required for maturation of ribosomal RNAs and formation of the large ribosomal subunit. The sequence is that of Ribosome biogenesis protein WDR12 homolog from Culex quinquefasciatus (Southern house mosquito).